The chain runs to 1907 residues: Receptor-type tyrosine-protein phosphatase S (1907 aa).

Residues 1-29 (MAPTWSPSVVSVVGPVGLFLVLLARGCLA) form the signal peptide. Residues 30–1257 (EEPPRFIREP…PQPIVDGEEG (1228 aa)) are Extracellular-facing. Ig-like C2-type domains lie at 33-123 (PRFI…AKLT), 135-224 (PNID…ANLY), and 232-314 (PRFS…AQIT). Intrachain disulfides connect Cys54–Cys107 and Cys156–Cys207. Residues 68–72 (KKGKK) form an important for binding to glycosaminoglycan chains region. N-linked (GlcNAc...) asparagine glycans are attached at residues Asn250 and Asn295. A disulfide bond links Cys253 and Cys298. Fibronectin type-III domains lie at 321–411 (APGT…TGEQ), 416–510 (APRN…TQQG), 514–603 (QPMN…TLQA), 608–705 (PPQD…TDED), 710–809 (PPRK…TKGA), 810–906 (VLGR…APRG), 907–1008 (FPQI…LARD), and 1011–1095 (SPKN…TAFN). The span at 691–700 (PGPESSPVVV) shows a compositional bias: low complexity. The disordered stretch occupies residues 691–711 (PGPESSPVVVRTDEDVPSAPP). A glycan (N-linked (GlcNAc...) asparagine) is linked at Asn720. A glycan (N-linked (GlcNAc...) asparagine) is linked at Asn916. A helical transmembrane segment spans residues 1258 to 1278 (LIWVIGPVLAVVFIICIVIAI). The Cytoplasmic segment spans residues 1279–1907 (LLYKNKPDSK…YLGSFDHYAT (629 aa)). The segment covering 1286 to 1296 (DSKRKDSEPRT) has biased composition (basic and acidic residues). A disordered region spans residues 1286–1313 (DSKRKDSEPRTKCLLNNADLAPHHPKDP). Tyrosine-protein phosphatase domains are found at residues 1352–1607 (LSQE…LLEA) and 1639–1898 (MELE…ALEY). Substrate contacts are provided by residues Asp1516, 1548–1554 (CSAGVGR), and Gln1592. Cys1548 (phosphocysteine intermediate) is an active-site residue. Cys1839 (phosphocysteine intermediate) is an active-site residue.

Belongs to the protein-tyrosine phosphatase family. Receptor class 2A subfamily. In terms of assembly, binding to large heparan sulfate proteoglycan structures promotes oligomerization. Binding to chondroitin sulfate proteoglycan does not lead to oligomerization. Interacts (via Ig-like domains) with NTRK3. Interacts (via Ig-like domains) with NTRK1, but does not form detectable complexes with NTRK2. Interacts with PPFIA1, PPFIA2 and PPFIA3. A cleavage occurs, separating the extracellular domain from the transmembrane segment. This process called 'ectodomain shedding' is thought to be involved in receptor desensitization, signal transduction and/or membrane localization. Detected in brain cortex, cerebellum and thoracic spinal cord (at protein level). Detected in motor cortex and white matter of the spinal cord, but not in spinal cord gray matter. Isoform 1 and isoform 6 are predominantly expressed in the brain (cerebrum and cerebellum) and to a lesser extent in the heart and skeletal muscle. Also found in neuronal-derived cell lines. Detected in the ganglion cell layer of the retina and in glial cells along the optic nerve. Detected in bone marrow and spleen plasmacytoid dendritic cells.

It is found in the cell membrane. It localises to the cell projection. Its subcellular location is the axon. The protein localises to the perikaryon. The protein resides in the cytoplasmic vesicle. It is found in the secretory vesicle. It localises to the synaptic vesicle membrane. Its subcellular location is the synapse. The protein localises to the synaptosome. The protein resides in the postsynaptic density. It is found in the neuron projection. It localises to the growth cone. It catalyses the reaction O-phospho-L-tyrosyl-[protein] + H2O = L-tyrosyl-[protein] + phosphate. Cell surface receptor that binds to glycosaminoglycans, including chondroitin sulfate proteoglycans and heparan sulfate proteoglycans. Binding to chondroitin sulfate and heparan sulfate proteoglycans has opposite effects on PTPRS oligomerization and regulation of neurite outgrowth. Contributes to the inhibition of neurite and axonal outgrowth by chondroitin sulfate proteoglycans, also after nerve transection. Plays a role in stimulating neurite outgrowth in response to the heparan sulfate proteoglycan GPC2. Required for normal brain development, especially for normal development of the pituitary gland and the olfactory bulb. Functions as a tyrosine phosphatase. Mediates dephosphorylation of NTRK1, NTRK2 and NTRK3. Plays a role in down-regulation of signaling cascades that lead to the activation of Akt and MAP kinases. Down-regulates TLR9-mediated activation of NF-kappa-B, as well as production of TNF, interferon alpha and interferon beta. The chain is Receptor-type tyrosine-protein phosphatase S (Ptprs) from Mus musculus (Mouse).